The chain runs to 302 residues: Syntaxin-17 (302 aa).

An N-acetylserine modification is found at serine 2. Topologically, residues 2–228 (SEDEEKVKLR…KNLGKAAKYK (227 aa)) are cytoplasmic. Position 41 is an N6-acetyllysine (lysine 41). A coiled-coil region spans residues 53–123 (EEHINAGRTV…EELKKQFNDE (71 aa)). Tyrosine 157 is subject to Phosphotyrosine; by ABL1. A t-SNARE coiled-coil homology domain is found at 162 to 224 (IPQDQNAAES…EEGTKNLGKA (63 aa)). Residues 229 to 249 (LAALPVAGALIGGMVGGPIGL) form a helical membrane-spanning segment. A necessary and sufficient for localization to autophagosome region spans residues 229–275 (LAALPVAGALIGGMVGGPIGLLAGFKVAGIAAALGGGVLGFTGGKLI). Topologically, residues 250–254 (LAGFK) are lumenal. Residues 255-275 (VAGIAAALGGGVLGFTGGKLI) traverse the membrane as a helical segment. Topologically, residues 276–302 (QRKKQKMMEKLTSSCPDLPSQTDKKCS) are cytoplasmic. Residue serine 289 is modified to Phosphoserine. Residues 299 to 302 (KKCS) carry the Endoplasmic reticulum retention signal motif.

Belongs to the syntaxin family. Forms a SNARE complex composed of VAMP8, SNAP29 and STX17 involved in fusion of autophagosome with lysosome. Interacts with VAMP7 and VTI1B. Probably interacts with BET1, SCFD1 and SEC22B. Interacts with PTPN2 and ABL1; involved in STX17 phosphorylation. Interacts with COPB1. Interacts with TMED9 and TMED10; the interaction is direct. Interacts with ATG14. Interacts with RUBCNL/PACER; promoting targeting of RUBCNL/PACER to autophagosome. Interacts with VAMP8, SNAP29, VPS39 and VPS41; these interactions are increased in the absence of TMEM39A. Interacts with IRGM; promoting STX17 recruitment to autophagosomes. Interacts with ATG8 proteins GABARAP and MAP1LC3B. Interacts with RNF115; this interaction enhances STX17 stability which in turn promotes autophagosome maturation. Interacts with RAB39A (GTP-bound); the interaction promotes autophagosome-lysosome membrane fusion driven by STX17-SNAP29-VAMP8. Interacts with RAB39B; the interaction may promote a different fonction in autophagy as compared with RAB39A. In terms of assembly, (Microbial infection) The interactions with VAMP8, SNAP29 and VPS41 are decreased in presence of SARS coronavirus-2/SARS-CoV-2 ORF3A protein. Post-translationally, phosphorylated at Tyr-157 probably by ABL1. Dephosphorylation by PTPN2; regulates exit from the endoplasmic reticulum. (Microbial infection) Cleaved by the L.pneumophila serine protease Lpg1137, impairing endoplasmic reticulum-mitochondria communication, leading to inhibit autophagy.

Its subcellular location is the endoplasmic reticulum membrane. It localises to the smooth endoplasmic reticulum membrane. The protein resides in the endoplasmic reticulum-Golgi intermediate compartment membrane. It is found in the cytoplasmic vesicle. The protein localises to the autophagosome membrane. Its subcellular location is the COPII-coated vesicle membrane. It localises to the cytoplasm. The protein resides in the cytosol. It is found in the mitochondrion membrane. The protein localises to the autolysosome membrane. Its function is as follows. SNAREs, soluble N-ethylmaleimide-sensitive factor-attachment protein receptors, are essential proteins for fusion of cellular membranes. SNAREs localized on opposing membranes assemble to form a trans-SNARE complex, an extended, parallel four alpha-helical bundle that drives membrane fusion. STX17 is a SNARE of the autophagosome involved in autophagy through the direct control of autophagosome membrane fusion with the lysosome membrane. May also play a role in the early secretory pathway where it may maintain the architecture of the endoplasmic reticulum-Golgi intermediate compartment/ERGIC and Golgi and/or regulate transport between the endoplasmic reticulum, the ERGIC and the Golgi. The protein is Syntaxin-17 of Homo sapiens (Human).